We begin with the raw amino-acid sequence, 199 residues long: 7-methyl-GTP pyrophosphatase (199 aa).

The Proton acceptor role is filled by D76.

This sequence belongs to the Maf family. YceF subfamily. Requires a divalent metal cation as cofactor.

Its subcellular location is the cytoplasm. The enzyme catalyses N(7)-methyl-GTP + H2O = N(7)-methyl-GMP + diphosphate + H(+). Its function is as follows. Nucleoside triphosphate pyrophosphatase that hydrolyzes 7-methyl-GTP (m(7)GTP). May have a dual role in cell division arrest and in preventing the incorporation of modified nucleotides into cellular nucleic acids. This Brucella suis biovar 1 (strain 1330) protein is 7-methyl-GTP pyrophosphatase (maf-2).